The sequence spans 156 residues: Small ribosomal subunit protein uS7 (156 aa).

This sequence belongs to the universal ribosomal protein uS7 family. Part of the 30S ribosomal subunit. Contacts proteins S9 and S11.

One of the primary rRNA binding proteins, it binds directly to 16S rRNA where it nucleates assembly of the head domain of the 30S subunit. Is located at the subunit interface close to the decoding center, probably blocks exit of the E-site tRNA. In Limosilactobacillus reuteri (strain DSM 20016) (Lactobacillus reuteri), this protein is Small ribosomal subunit protein uS7.